The sequence spans 86 residues: MKVSVLITLAVLGVMFVWASAAELEQSGSDQKDSPAWLKSMERIFQSEERECRKMFGGCSKHEDCCAHLACKRTFNYCAWDGSFSK.

Residues 1–21 (MKVSVLITLAVLGVMFVWASA) form the signal peptide. Residues 22–51 (AELEQSGSDQKDSPAWLKSMERIFQSEERE) constitute a propeptide that is removed on maturation. 3 disulfides stabilise this stretch: C52/C66, C59/C71, and C65/C78.

This sequence belongs to the neurotoxin 10 (Hwtx-1) family. 41 (Jztx-36) subfamily. As to expression, expressed by the venom gland.

The protein localises to the secreted. In terms of biological role, probable ion channel inhibitor. The protein is U13-theraphotoxin-Cg1b of Chilobrachys guangxiensis (Chinese earth tiger tarantula).